Here is a 551-residue protein sequence, read N- to C-terminus: Nucleobase-ascorbate transporter 3 (551 aa).

The tract at residues 1–30 (MVETGHHHQHPPAPAAAGHPPVPSMAMARN) is disordered. The next 12 helical transmembrane spans lie at 56–76 (ETVVLAFQHYIVMLGTTVLIA), 92–111 (RVIQTILFMSGINTLLQTLI), 117–136 (TVMGVSFAYVLPVLSIIRDY), 158–178 (SLIISSFVNIIIGYGQAWGNL), 179–199 (IRIFSPIIVVPVVSVVSLGLF), 202–222 (GFPLLANCVEIGLPMLILLII), 242–262 (ALLVCLAIIWAFAAILTVSGA), 306–326 (VFGMFGAAIVASAESTGVFFA), 390–410 (FFMIFFSIFGKFGAFFASIPL), 412–432 (IFAGVYCILLGIVVAVGISFI), 442–462 (NMYVIGVSLFLSLSIAQYFLA), and 481–501 (DILNTIFASAPLVATILATIL).

It belongs to the nucleobase:cation symporter-2 (NCS2) (TC 2.A.40) family. As to expression, expressed in the apical meristem 4 days after imbibition (DAI). Expressed in the major veins of rosette leaves and pedicels. Expressed in the root central cylinder, root meristems, root tips and lateral root primordia.

The protein localises to the membrane. In Arabidopsis thaliana (Mouse-ear cress), this protein is Nucleobase-ascorbate transporter 3 (NAT3).